The sequence spans 256 residues: Protein crossbronx-like (256 aa).

The region spanning asparagine 17–lysine 179 is the UBC core domain.

The protein belongs to the ubiquitin-conjugating enzyme family. FTS subfamily.

The chain is Protein crossbronx-like from Drosophila mojavensis (Fruit fly).